A 490-amino-acid polypeptide reads, in one-letter code: Aspartyl/glutamyl-tRNA(Asn/Gln) amidotransferase subunit B (490 aa).

This sequence belongs to the GatB/GatE family. GatB subfamily. As to quaternary structure, heterotrimer of A, B and C subunits.

It catalyses the reaction L-glutamyl-tRNA(Gln) + L-glutamine + ATP + H2O = L-glutaminyl-tRNA(Gln) + L-glutamate + ADP + phosphate + H(+). The catalysed reaction is L-aspartyl-tRNA(Asn) + L-glutamine + ATP + H2O = L-asparaginyl-tRNA(Asn) + L-glutamate + ADP + phosphate + 2 H(+). Its function is as follows. Allows the formation of correctly charged Asn-tRNA(Asn) or Gln-tRNA(Gln) through the transamidation of misacylated Asp-tRNA(Asn) or Glu-tRNA(Gln) in organisms which lack either or both of asparaginyl-tRNA or glutaminyl-tRNA synthetases. The reaction takes place in the presence of glutamine and ATP through an activated phospho-Asp-tRNA(Asn) or phospho-Glu-tRNA(Gln). This Synechococcus sp. (strain JA-3-3Ab) (Cyanobacteria bacterium Yellowstone A-Prime) protein is Aspartyl/glutamyl-tRNA(Asn/Gln) amidotransferase subunit B.